A 181-amino-acid chain; its full sequence is Large ribosomal subunit protein uL10 (181 aa).

The protein belongs to the universal ribosomal protein uL10 family. Part of the ribosomal stalk of the 50S ribosomal subunit. The N-terminus interacts with L11 and the large rRNA to form the base of the stalk. The C-terminus forms an elongated spine to which L12 dimers bind in a sequential fashion forming a multimeric L10(L12)X complex.

Its function is as follows. Forms part of the ribosomal stalk, playing a central role in the interaction of the ribosome with GTP-bound translation factors. This Protochlamydia amoebophila (strain UWE25) protein is Large ribosomal subunit protein uL10.